A 270-amino-acid polypeptide reads, in one-letter code: MVAVEQSEASRLGPVFDSCRANNRAALIGYLPTGYPDVPASVAAMTALVESGCDIIEVGVPYSDPGMDGPTIARATEAALRGGVRVRDTLAAVEAISIAGGRAVVMTYWNPVLRYGVDAFARDLAAAGGLGLITPDLIPDEAQQWLAASEEHRLDRIFLVAPSSTPERLAATVEASRGFVYAASTMGVTGARDAVSQAAPELVGRVKAVSDIPVGVGLGVRSRAQAAQIAQYADGVIVGSALVTALTEGLPRLRALTGELAAGVRLGMSA.

Catalysis depends on proton acceptor residues E57 and D68.

It belongs to the TrpA family. Tetramer of two alpha and two beta chains.

It catalyses the reaction (1S,2R)-1-C-(indol-3-yl)glycerol 3-phosphate + L-serine = D-glyceraldehyde 3-phosphate + L-tryptophan + H2O. Its pathway is amino-acid biosynthesis; L-tryptophan biosynthesis; L-tryptophan from chorismate: step 5/5. The alpha subunit is responsible for the aldol cleavage of indoleglycerol phosphate to indole and glyceraldehyde 3-phosphate. This is Tryptophan synthase alpha chain from Mycobacterium bovis (strain ATCC BAA-935 / AF2122/97).